The sequence spans 159 residues: Transcription elongation factor GreA (159 aa).

Residues 3–37 (TNKEVVLTYEGLQKLEQELENLKTVKRREVAERIK) adopt a coiled-coil conformation.

It belongs to the GreA/GreB family.

Necessary for efficient RNA polymerase transcription elongation past template-encoded arresting sites. The arresting sites in DNA have the property of trapping a certain fraction of elongating RNA polymerases that pass through, resulting in locked ternary complexes. Cleavage of the nascent transcript by cleavage factors such as GreA or GreB allows the resumption of elongation from the new 3'terminus. GreA releases sequences of 2 to 3 nucleotides. The polypeptide is Transcription elongation factor GreA (Acetivibrio thermocellus (strain ATCC 27405 / DSM 1237 / JCM 9322 / NBRC 103400 / NCIMB 10682 / NRRL B-4536 / VPI 7372) (Clostridium thermocellum)).